The primary structure comprises 290 residues: Diaminopimelate epimerase (290 aa).

The substrate site is built by asparagine 14 and asparagine 67. The active-site Proton donor is the cysteine 76. Substrate is bound by residues glycine 77–asparagine 78, asparagine 166, asparagine 199, and glutamate 217–arginine 218. Cysteine 226 functions as the Proton acceptor in the catalytic mechanism. Glycine 227–threonine 228 lines the substrate pocket.

Belongs to the diaminopimelate epimerase family. In terms of assembly, homodimer.

Its subcellular location is the cytoplasm. The enzyme catalyses (2S,6S)-2,6-diaminopimelate = meso-2,6-diaminopimelate. Its pathway is amino-acid biosynthesis; L-lysine biosynthesis via DAP pathway; DL-2,6-diaminopimelate from LL-2,6-diaminopimelate: step 1/1. Functionally, catalyzes the stereoinversion of LL-2,6-diaminopimelate (L,L-DAP) to meso-diaminopimelate (meso-DAP), a precursor of L-lysine and an essential component of the bacterial peptidoglycan. The polypeptide is Diaminopimelate epimerase (Geobacillus thermodenitrificans (strain NG80-2)).